The following is a 379-amino-acid chain: Carbamoyl phosphate synthase small chain (379 aa).

Positions 1–188 are CPSase; the sequence is MSTPAILALA…ELGKGFTQPE (188 aa). The L-glutamine site is built by serine 47, glycine 240, and glycine 242. Residues 192–379 form the Glutamine amidotransferase type-1 domain; that stretch reads HVVAYDYGVK…FIELIEAAKK (188 aa). Cysteine 269 functions as the Nucleophile in the catalytic mechanism. Leucine 270, glutamine 273, asparagine 311, glycine 313, and phenylalanine 314 together coordinate L-glutamine. Active-site residues include histidine 353 and glutamate 355.

This sequence belongs to the CarA family. In terms of assembly, composed of two chains; the small (or glutamine) chain promotes the hydrolysis of glutamine to ammonia, which is used by the large (or ammonia) chain to synthesize carbamoyl phosphate. Tetramer of heterodimers (alpha,beta)4.

The enzyme catalyses hydrogencarbonate + L-glutamine + 2 ATP + H2O = carbamoyl phosphate + L-glutamate + 2 ADP + phosphate + 2 H(+). It carries out the reaction L-glutamine + H2O = L-glutamate + NH4(+). It participates in amino-acid biosynthesis; L-arginine biosynthesis; carbamoyl phosphate from bicarbonate: step 1/1. It functions in the pathway pyrimidine metabolism; UMP biosynthesis via de novo pathway; (S)-dihydroorotate from bicarbonate: step 1/3. Small subunit of the glutamine-dependent carbamoyl phosphate synthetase (CPSase). CPSase catalyzes the formation of carbamoyl phosphate from the ammonia moiety of glutamine, carbonate, and phosphate donated by ATP, constituting the first step of 2 biosynthetic pathways, one leading to arginine and/or urea and the other to pyrimidine nucleotides. The small subunit (glutamine amidotransferase) binds and cleaves glutamine to supply the large subunit with the substrate ammonia. The polypeptide is Carbamoyl phosphate synthase small chain (Acinetobacter baylyi (strain ATCC 33305 / BD413 / ADP1)).